The sequence spans 339 residues: Anthranilate phosphoribosyltransferase (339 aa).

Residues Gly81, 84-85 (GD), Ser89, 91-94 (NVSS), 109-117 (KHGNRALSS), and Ala121 contribute to the 5-phospho-alpha-D-ribose 1-diphosphate site. An anthranilate-binding site is contributed by Gly81. Ser93 contacts Mg(2+). Asn112 provides a ligand contact to anthranilate. Arg167 contacts anthranilate. 2 residues coordinate Mg(2+): Asp225 and Glu226.

The protein belongs to the anthranilate phosphoribosyltransferase family. As to quaternary structure, homodimer. Requires Mg(2+) as cofactor.

It catalyses the reaction N-(5-phospho-beta-D-ribosyl)anthranilate + diphosphate = 5-phospho-alpha-D-ribose 1-diphosphate + anthranilate. The protein operates within amino-acid biosynthesis; L-tryptophan biosynthesis; L-tryptophan from chorismate: step 2/5. Its function is as follows. Catalyzes the transfer of the phosphoribosyl group of 5-phosphorylribose-1-pyrophosphate (PRPP) to anthranilate to yield N-(5'-phosphoribosyl)-anthranilate (PRA). This is Anthranilate phosphoribosyltransferase from Brucella suis biovar 1 (strain 1330).